Consider the following 406-residue polypeptide: Tryptophan 2,3-dioxygenase (406 aa).

Phosphoserine is present on serine 19. Substrate-binding positions include 72–76 (FIITH) and arginine 144. Heme is bound at residue histidine 328. Threonine 342 lines the substrate pocket.

Belongs to the tryptophan 2,3-dioxygenase family. In terms of assembly, homotetramer. Dimer of dimers. It depends on heme as a cofactor. As to expression, liver.

It carries out the reaction L-tryptophan + O2 = N-formyl-L-kynurenine. It participates in amino-acid degradation; L-tryptophan degradation via kynurenine pathway; L-kynurenine from L-tryptophan: step 1/2. Its function is as follows. Heme-dependent dioxygenase that catalyzes the oxidative cleavage of the L-tryptophan (L-Trp) pyrrole ring and converts L-tryptophan to N-formyl-L-kynurenine. Catalyzes the oxidative cleavage of the indole moiety. The protein is Tryptophan 2,3-dioxygenase of Rattus norvegicus (Rat).